We begin with the raw amino-acid sequence, 408 residues long: Tryptophan--tRNA ligase, chloroplastic/mitochondrial (408 aa).

The transit peptide at 1-52 (MGHATSLSHFLILSSSRFSRLGSLTRLLSKPTSLSGSFSSISVTGQGFRCCC) directs the protein to the chloroplast and mitochondrion. At Ser-53 the chain carries N-acetylserine. ATP is bound by residues Gln-72 and 78–81 (HLGN). Positions 73–81 (PTGSVHLGN) match the 'HIGH' region motif. Asp-197 contributes to the L-tryptophan binding site. ATP is bound by residues 209–211 (GED), Val-260, 269–273 (KMSKS), and Lys-272. Residues 269-273 (KMSKS) carry the 'KMSKS' region motif.

Belongs to the class-I aminoacyl-tRNA synthetase family.

It is found in the plastid. The protein resides in the chloroplast. The protein localises to the mitochondrion. It catalyses the reaction tRNA(Trp) + L-tryptophan + ATP = L-tryptophyl-tRNA(Trp) + AMP + diphosphate + H(+). This Arabidopsis thaliana (Mouse-ear cress) protein is Tryptophan--tRNA ligase, chloroplastic/mitochondrial.